A 496-amino-acid chain; its full sequence is MQRDCIMDYKESCPSVSIPSSDEHREKKKRFTVYKVLVSVGRSEWFVFRRYAEFDKLYNSLKKQFPAMALKIPAKRIFGDNFDPDFIKQRRAGLNEFIQNLVRYPELYNHPDVRAFLQMDSPRHQSDPSEDEDERSTSKPHSTSRNINLGPTGNPHAKPTDFDFLKVIGKGSFGKVLLAKRKLDGKFYAVKVLQKKIVLNRKEQKHIMAERNVLLKNVKHPFLVGLHYSFQTTEKLYFVLDFVNGGELFFHLQRERSFPEPRARFYAAEIASALGYLHSIKIVYRDLKPENILLDSMGHVVLTDFGLCKEGIAISDTTTTFCGTPEYLAPEVIRKQPYDNTVDWWCLGAVLYEMLYGLPPFYCRDVAEMYDNILHKPLNLRPGVSLTAWSILEELLEKNRQNRLGAKEDFLEIQNHPFFESLSWTDLVQKKIPPPFNPNVAGPDDIRNFDAVFTEETVPYSVCVSSDYSIVNASVLEADDAFVGFSYAPPSEDLFL.

One can recognise a PX domain in the interval 12–124 (SCPSVSIPSS…AFLQMDSPRH (113 aa)). Residues 121-157 (SPRHQSDPSEDEDERSTSKPHSTSRNINLGPTGNPHA) are disordered. Phosphoserine occurs at positions 126 and 129. Over residues 139 to 151 (KPHSTSRNINLGP) the composition is skewed to polar residues. Residues 162–419 (FDFLKVIGKG…FLEIQNHPFF (258 aa)) enclose the Protein kinase domain. Residues 168-176 (IGKGSFGKV) and Lys-191 contribute to the ATP site. A Nuclear localization signal motif is present at residues 195–205 (KKIVLNRKEQK). Residue Asp-286 is the Proton acceptor of the active site. Position 320 is a phosphothreonine; by PDPK1 (Thr-320). The region spanning 420–496 (ESLSWTDLVQ…YAPPSEDLFL (77 aa)) is the AGC-kinase C-terminal domain. Residue Ser-486 is modified to Phosphoserine.

It belongs to the protein kinase superfamily. AGC Ser/Thr protein kinase family. Interacts with GSK3B and FLII. Interacts with PDPK1 in a phosphorylation-dependent manner. Activated by phosphorylation on Ser-486 by an unknown kinase (may be mTORC2 but not confirmed), transforming it into a substrate for PDPK1 which then phosphorylates it on Thr-320. Widely expressed, predominantly in the heart, spleen and 7-day embryo.

It localises to the cytoplasmic vesicle. The protein localises to the early endosome. Its subcellular location is the recycling endosome. The enzyme catalyses L-seryl-[protein] + ATP = O-phospho-L-seryl-[protein] + ADP + H(+). It carries out the reaction L-threonyl-[protein] + ATP = O-phospho-L-threonyl-[protein] + ADP + H(+). Its activity is regulated as follows. Two specific sites, one in the kinase domain (Thr-320) and the other in the C-terminal regulatory region (Ser-486), need to be phosphorylated for its full activation. In terms of biological role, serine/threonine-protein kinase which is involved in the regulation of a wide variety of ion channels, membrane transporters, cell growth, proliferation, survival and migration. Up-regulates Na(+) channels: SCNN1A/ENAC and SCN5A, K(+) channels: KCNA3/KV1.3, KCNE1, KCNQ1 and KCNH2/HERG, epithelial Ca(2+) channels: TRPV5 and TRPV6, chloride channel: BSND, creatine transporter: SLC6A8, Na(+)/dicarboxylate cotransporter: SLC13A2/NADC1, Na(+)-dependent phosphate cotransporter: SLC34A2/NAPI-2B, amino acid transporters: SLC1A5/ASCT2 and SLC6A19, glutamate transporters: SLC1A3/EAAT1, SLC1A6/EAAT4 and SLC1A7/EAAT5, glutamate receptors: GRIA1/GLUR1 and GRIK2/GLUR6, Na(+)/H(+) exchanger: SLC9A3/NHE3, and the Na(+)/K(+) ATPase. Plays a role in the regulation of renal tubular phosphate transport and bone density. Phosphorylates NEDD4L and GSK3B. Positively regulates ER transcription activity through phosphorylation of FLII. Negatively regulates the function of ITCH/AIP4 via its phosphorylation and thereby prevents CXCR4 from being efficiently sorted to lysosomes. This chain is Serine/threonine-protein kinase Sgk3 (Sgk3), found in Mus musculus (Mouse).